A 271-amino-acid polypeptide reads, in one-letter code: Hydroxyethylthiazole kinase (271 aa).

M46 contacts substrate. The ATP site is built by R122 and T169. G196 is a substrate binding site.

This sequence belongs to the Thz kinase family. It depends on Mg(2+) as a cofactor.

It catalyses the reaction 5-(2-hydroxyethyl)-4-methylthiazole + ATP = 4-methyl-5-(2-phosphooxyethyl)-thiazole + ADP + H(+). It participates in cofactor biosynthesis; thiamine diphosphate biosynthesis; 4-methyl-5-(2-phosphoethyl)-thiazole from 5-(2-hydroxyethyl)-4-methylthiazole: step 1/1. In terms of biological role, catalyzes the phosphorylation of the hydroxyl group of 4-methyl-5-beta-hydroxyethylthiazole (THZ). In Alkaliphilus oremlandii (strain OhILAs) (Clostridium oremlandii (strain OhILAs)), this protein is Hydroxyethylthiazole kinase.